Reading from the N-terminus, the 598-residue chain is Elongation factor 4 (598 aa).

Residues 2 to 184 (KNIRNFSIIA…EIVHKIPAPE (183 aa)) form the tr-type G domain. GTP contacts are provided by residues 14–19 (DHGKST) and 131–134 (NKID).

The protein belongs to the TRAFAC class translation factor GTPase superfamily. Classic translation factor GTPase family. LepA subfamily.

It is found in the cell inner membrane. The catalysed reaction is GTP + H2O = GDP + phosphate + H(+). Required for accurate and efficient protein synthesis under certain stress conditions. May act as a fidelity factor of the translation reaction, by catalyzing a one-codon backward translocation of tRNAs on improperly translocated ribosomes. Back-translocation proceeds from a post-translocation (POST) complex to a pre-translocation (PRE) complex, thus giving elongation factor G a second chance to translocate the tRNAs correctly. Binds to ribosomes in a GTP-dependent manner. In Pasteurella multocida (strain Pm70), this protein is Elongation factor 4.